A 76-amino-acid polypeptide reads, in one-letter code: Heat shock factor-binding protein 1 (76 aa).

It belongs to the HSBP1 family. Homohexamer. Associates with heptad repeats of HSF1 trimers and probably also HSF1 monomers, and with HSP70. Association with HSF1 trimers and HSP70 coincides with attenuation of heat shock response and the conversion of HSF1 trimer to monomer.

Its subcellular location is the nucleus. Its function is as follows. Negative regulator of the heat shock response. Negatively affects HSF1 DNA-binding activity. May have a role in the suppression of the activation of the stress response during the aging process. The chain is Heat shock factor-binding protein 1 (Hsbp1) from Mus musculus (Mouse).